The sequence spans 661 residues: Peroxisomal acyl-coenzyme A oxidase 1 (661 aa).

2 positions are modified to N6-succinyllysine: Lys89 and Lys90. Thr139 lines the FAD pocket. N6-succinyllysine is present on Lys159. Gly178 lines the FAD pocket. An N6-acetyllysine modification is found at Lys216. The residue at position 241 (Lys241) is an N6-succinyllysine. N6-acetyllysine is present on residues Lys255, Lys267, and Lys272. Lys349 carries the post-translational modification N6-succinyllysine. The Proton acceptor role is filled by Glu421. 4 positions are modified to N6-acetyllysine; alternate: Lys437, Lys446, Lys512, and Lys637. N6-succinyllysine; alternate is present on residues Lys437, Lys446, Lys512, and Lys637. Position 643 is an N6-succinyllysine (Lys643). The residue at position 649 (Ser649) is a Phosphoserine. Lys652 carries the N6-acetyllysine modification. Lys655 carries the post-translational modification N6-succinyllysine. The Microbody targeting signal signature appears at 659–661; it reads SKL.

It belongs to the acyl-CoA oxidase family. In terms of assembly, homodimer. Interacts with LONP2. Requires FAD as cofactor.

Its subcellular location is the peroxisome. The enzyme catalyses a 2,3-saturated acyl-CoA + O2 = a (2E)-enoyl-CoA + H2O2. It carries out the reaction hexadecanoyl-CoA + O2 = (2E)-hexadecenoyl-CoA + H2O2. It catalyses the reaction dodecanoyl-CoA + O2 = (2E)-dodecenoyl-CoA + H2O2. The catalysed reaction is octanoyl-CoA + O2 = (2E)-octenoyl-CoA + H2O2. The enzyme catalyses decanoyl-CoA + O2 = (2E)-decenoyl-CoA + H2O2. It carries out the reaction tetradecanoyl-CoA + O2 = (2E)-tetradecenoyl-CoA + H2O2. It catalyses the reaction hexadecanedioyl-CoA + O2 = (2E)-hexadecenedioyl-CoA + H2O2. The catalysed reaction is tetracosanoyl-CoA + O2 = (2E)-tetracosenoyl-CoA + H2O2. The enzyme catalyses glutaryl-CoA + O2 = (2E)-glutaconyl-CoA + H2O2. It carries out the reaction hexanoyl-CoA + O2 = (2E)-hexenoyl-CoA + H2O2. It catalyses the reaction octadecanoyl-CoA + O2 = (2E)-octadecenoyl-CoA + H2O2. The catalysed reaction is (5Z,8Z,11Z,14Z,17Z)-eicosapentaenoyl-CoA + O2 = (2E,5Z,8Z,11Z,14Z,17Z)-icosahexaenoyl-CoA + H2O2. The enzyme catalyses (6Z,9Z,12Z,15Z,18Z,21Z)-tetracosahexaenoyl-CoA + O2 = (2E,6Z,9Z,12Z,15Z,18Z,21Z)-tetracosaheptaenoyl-CoA + H2O2. It participates in lipid metabolism; peroxisomal fatty acid beta-oxidation. Its function is as follows. Involved in the initial and rate-limiting step of peroxisomal beta-oxidation of straight-chain saturated and unsaturated very-long-chain fatty acids. Catalyzes the desaturation of fatty acyl-CoAs such as palmitoyl-CoA (hexadecanoyl-CoA) to 2-trans-enoyl-CoAs ((2E)-enoyl-CoAs) such as (2E)-hexadecenoyl-CoA, and donates electrons directly to molecular oxygen (O(2)), thereby producing hydrogen peroxide (H(2)O(2)). Isoform 2 shows higher activity with hexadecanoyl-CoA as substrate than isoform 1. In Phascolarctos cinereus (Koala), this protein is Peroxisomal acyl-coenzyme A oxidase 1 (ACOX1).